The chain runs to 775 residues: Beta-galactosidase 7 (775 aa).

A signal peptide spans 1–17 (MRGGMAITAALVVVAAA). The active-site Proton donor is glutamate 185. Glutamate 256 acts as the Nucleophile in catalysis. N-linked (GlcNAc...) asparagine glycans are attached at residues asparagine 257, asparagine 266, asparagine 277, asparagine 358, and asparagine 602. One can recognise an SUEL-type lectin domain in the interval 689–775 (RGKVPKVRIW…KSLLVVADCR (87 aa)).

This sequence belongs to the glycosyl hydrolase 35 family.

It localises to the secreted. The protein resides in the extracellular space. Its subcellular location is the apoplast. The catalysed reaction is Hydrolysis of terminal non-reducing beta-D-galactose residues in beta-D-galactosides.. The protein is Beta-galactosidase 7 of Oryza sativa subsp. japonica (Rice).